Here is a 230-residue protein sequence, read N- to C-terminus: Extracellular deoxyribonuclease (230 aa).

A signal peptide spans 1 to 20 (MFRPLLSLCLALLVSAPAHA).

The protein belongs to the EndA/NucM nuclease family.

The protein resides in the secreted. The polypeptide is Extracellular deoxyribonuclease (dns) (Aeromonas hydrophila).